Reading from the N-terminus, the 312-residue chain is Glycerol-3-phosphate dehydrogenase [NAD(P)+] (312 aa).

NADPH contacts are provided by Trp11, Arg30, Arg31, and Lys95. Sn-glycerol 3-phosphate contacts are provided by Lys95, Gly123, and Ser125. Ala127 is a binding site for NADPH. Positions 177, 230, 240, 241, and 242 each coordinate sn-glycerol 3-phosphate. Lys177 acts as the Proton acceptor in catalysis. NADPH is bound at residue Arg241. NADPH-binding residues include Val265 and Glu267.

The protein belongs to the NAD-dependent glycerol-3-phosphate dehydrogenase family.

It localises to the cytoplasm. It catalyses the reaction sn-glycerol 3-phosphate + NAD(+) = dihydroxyacetone phosphate + NADH + H(+). The catalysed reaction is sn-glycerol 3-phosphate + NADP(+) = dihydroxyacetone phosphate + NADPH + H(+). It participates in membrane lipid metabolism; glycerophospholipid metabolism. Functionally, catalyzes the reduction of the glycolytic intermediate dihydroxyacetone phosphate (DHAP) to sn-glycerol 3-phosphate (G3P), the key precursor for phospholipid synthesis. The chain is Glycerol-3-phosphate dehydrogenase [NAD(P)+] from Helicobacter pylori (strain P12).